The sequence spans 186 residues: UPF0340 protein M6_Spy1622 (186 aa).

The protein belongs to the UPF0340 family.

This is UPF0340 protein M6_Spy1622 from Streptococcus pyogenes serotype M6 (strain ATCC BAA-946 / MGAS10394).